We begin with the raw amino-acid sequence, 491 residues long: NADH-ubiquinone oxidoreductase chain 2 (491 aa).

14 helical membrane-spanning segments follow: residues 11 to 31 (MIKY…SISI), 38 to 58 (VHII…VIGI), 74 to 94 (ELIK…IKMF), 106 to 126 (ITDE…ISME), 129 to 149 (NLIT…ILAL), 161 to 181 (LKYY…IVSI), 210 to 230 (IALI…HGWL), 238 to 258 (GMLM…MVLI), 270 to 290 (AIMF…VGTI), 298 to 318 (LIRF…LMLA), 330 to 350 (VYYL…IMGF), 375 to 395 (GAIV…MTNF), 411 to 433 (VYLT…NLVK), and 463 to 483 (IVLG…ILNV).

The protein belongs to the complex I subunit 2 family.

It is found in the mitochondrion inner membrane. It catalyses the reaction a ubiquinone + NADH + 5 H(+)(in) = a ubiquinol + NAD(+) + 4 H(+)(out). In terms of biological role, core subunit of the mitochondrial membrane respiratory chain NADH dehydrogenase (Complex I) that is believed to belong to the minimal assembly required for catalysis. Complex I functions in the transfer of electrons from NADH to the respiratory chain. The immediate electron acceptor for the enzyme is believed to be ubiquinone. This is NADH-ubiquinone oxidoreductase chain 2 (nad2) from Dictyostelium citrinum (Slime mold).